The sequence spans 192 residues: Thymidine kinase (192 aa).

Residues 9–16 (ASMNAGKS) and 87–90 (DEAQ) contribute to the ATP site. Glutamate 88 functions as the Proton acceptor in the catalytic mechanism. Zn(2+) is bound by residues cysteine 145, cysteine 147, cysteine 182, and histidine 185.

Belongs to the thymidine kinase family. Homotetramer.

It is found in the cytoplasm. It carries out the reaction thymidine + ATP = dTMP + ADP + H(+). This is Thymidine kinase from Novosphingobium aromaticivorans (strain ATCC 700278 / DSM 12444 / CCUG 56034 / CIP 105152 / NBRC 16084 / F199).